Here is a 544-residue protein sequence, read N- to C-terminus: Protein RDR1 (544 aa).

The segment at residues 14 to 40 is a DNA-binding region (zn(2)-C6 fungal-type); the sequence is CETCRELKRKCDGNQPCGACVRFEYDC. The segment at 50-71 is disordered; it reads KRRKTVEQDKEAPLPSPPVHVD.

The protein resides in the nucleus. In terms of biological role, may act as a transcriptional repressor of multidrug resistance genes. The protein is Protein RDR1 (RDR1) of Gibberella zeae (strain ATCC MYA-4620 / CBS 123657 / FGSC 9075 / NRRL 31084 / PH-1) (Wheat head blight fungus).